Reading from the N-terminus, the 291-residue chain is Protease HtpX homolog (291 aa).

2 consecutive transmembrane segments (helical) span residues 4 to 24 (ILLF…VASL) and 39 to 59 (SALL…SLLI). Zn(2+) is bound at residue His144. Glu145 is a catalytic residue. A Zn(2+)-binding site is contributed by His148. The next 2 helical transmembrane spans lie at 159-179 (LIQG…GYAV) and 199-219 (VSTI…VAWF). Glu224 contributes to the Zn(2+) binding site.

It belongs to the peptidase M48B family. The cofactor is Zn(2+).

Its subcellular location is the cell inner membrane. The sequence is that of Protease HtpX homolog from Polaromonas naphthalenivorans (strain CJ2).